Consider the following 1068-residue polypeptide: MITSIPLLLSVLWVPILSWINFSSTFFLFGIYYGFLTTLPIGPSQLLSIRAFLLEGNFSGIAAVSGLITGQLLIFLSIFYSPLYVLLIKPHLLTLLVLPYILFYWYKIKDLIDYQSLKPITSIKDTRISKIFFDSFIFQLFNPVVLPSPVLARLLNIFLFRYSNNFIFLLSSFLGWCFGQFLFVSLGKLLLFRIESDSPILYLLVKRIIYRTFSIIILSFSLLHLSRAPVPFITKKLNDNLQFNLSKPEDSFVLTKSWPTLFFDYRKWNRPLRYIENSRFSSQSPIKKKVSQYFFNISLSDGKPRLSFTYLPSLYYFEKNLQKSSINFNLFSSNEIYEKWIKNKKNKKLKIYKEFKNRFKFLDNGFFLAEIIEKKNILSTFEGNIFTKICDPLLIKQYDKKMIVSKSPWLLTEKSYKLTKTQKTLTFSKKDNKLKKWISNQCQEFEDKNFILPWEPLTQDARRILSLLINKSKKTKIDTNLKQMNFFDENATQLLNKQNLSSIENTRKKINRKSNLNWELILNLSPRQKILFLNYLQKDKWNTLKISWKNFFLGDFTQIKNILFLLTKIIKPDQNYQFQEINKEIPRWTSKLKNDKFDVIAIGVTDIRQRKVKNLGYLIKGKDKRRKIIRRFSQQSDFRRKLVKGSMRARRRKTLIWKIFQVKINSPFFLRIMDKPNLNVNNVLKIKPTFQNILEKKKKESLNQKALFIKRTKADRFAIANRWDFPLAQWGRSWLLLIQSHLRKYILLPILIIFKNVIRLFLFQIPEWNQDWYEWNKEIHIRCTYDGTEVSEKELPEQWLRDGLQIKIIYPFYLKPWHNIQNRNNLPNKKNEKLDLIYDDTNFLQNLVKTKEHSNNLVKKKKLNYCYLTAWGFQTNLPFGNIKKQPSFWKPIKKKLKKNMFFKPYQNLKNISTKNKLYKISDVENLKNFNSKKKEYINPNLNNLDFKKKNVVITKLNNQNTLLKQNTDNDIFSINFEYKTSIYINNLENLLKKKHISIEKYLKKQKTLNLKKKLIMIKQKTIKILKKNVQLIKKLPKNLKINIQKIYINLKINKTKLINNISKFFQDN.

Transmembrane regions (helical) follow at residues 11-31, 68-88, 92-112, 131-151, 166-186, and 213-233; these read VLWVPILSWINFSSTFFLFGI, ITGQLLIFLSIFYSPLYVLLI, LLTLLVLPYILFYWYKIKDLI, IFFDSFIFQLFNPVVLPSPVL, FIFLLSSFLGWCFGQFLFVSL, and FSIIILSFSLLHLSRAPVPFI.

This sequence belongs to the TIC214 family. In terms of assembly, part of the Tic complex.

The protein localises to the plastid. It localises to the chloroplast inner membrane. Functionally, involved in protein precursor import into chloroplasts. May be part of an intermediate translocation complex acting as a protein-conducting channel at the inner envelope. In Marchantia polymorpha (Common liverwort), this protein is Putative protein TIC 214 N-terminal part.